A 544-amino-acid polypeptide reads, in one-letter code: Chaperonin GroEL (544 aa).

ATP is bound by residues 30–33 (TLGP), lysine 51, 87–91 (DGTTT), glycine 415, and aspartate 495.

The protein belongs to the chaperonin (HSP60) family. In terms of assembly, forms a cylinder of 14 subunits composed of two heptameric rings stacked back-to-back. Interacts with the co-chaperonin GroES.

The protein resides in the cytoplasm. It carries out the reaction ATP + H2O + a folded polypeptide = ADP + phosphate + an unfolded polypeptide.. Together with its co-chaperonin GroES, plays an essential role in assisting protein folding. The GroEL-GroES system forms a nano-cage that allows encapsulation of the non-native substrate proteins and provides a physical environment optimized to promote and accelerate protein folding. The sequence is that of Chaperonin GroEL from Aeromonas salmonicida.